The following is a 197-amino-acid chain: uncharacterized protein (197 aa).

4 helical membrane-spanning segments follow: residues 11 to 31 (IALIVVGIIALFLPWLTISAS), 85 to 105 (STFMMIFGIIPIILYIASIFV), 109 to 129 (AVVVGAGIAGITCASIFVVLF), and 174 to 194 (VGTGWYLTMIIGLALIAYPFI).

It localises to the cell membrane. This is an uncharacterized protein from Methanocaldococcus jannaschii (strain ATCC 43067 / DSM 2661 / JAL-1 / JCM 10045 / NBRC 100440) (Methanococcus jannaschii).